A 248-amino-acid chain; its full sequence is Ubiquinone biosynthesis O-methyltransferase (248 aa).

R41, G72, D93, and M136 together coordinate S-adenosyl-L-methionine.

The protein belongs to the methyltransferase superfamily. UbiG/COQ3 family.

The enzyme catalyses a 3-demethylubiquinol + S-adenosyl-L-methionine = a ubiquinol + S-adenosyl-L-homocysteine + H(+). It catalyses the reaction a 3-(all-trans-polyprenyl)benzene-1,2-diol + S-adenosyl-L-methionine = a 2-methoxy-6-(all-trans-polyprenyl)phenol + S-adenosyl-L-homocysteine + H(+). Its pathway is cofactor biosynthesis; ubiquinone biosynthesis. Functionally, O-methyltransferase that catalyzes the 2 O-methylation steps in the ubiquinone biosynthetic pathway. The sequence is that of Ubiquinone biosynthesis O-methyltransferase from Rhizobium etli (strain CIAT 652).